The chain runs to 117 residues: Hainantoxin-XV (117 aa).

The N-terminal stretch at 1-20 (MKLCAVIIASLLVCVAVASS) is a signal peptide. The tract at residues 20 to 55 (SSDNQKEFAQEKEMTREETQSLGEHEKDDEVTGSEE) is disordered. The propeptide occupies 21–56 (SDNQKEFAQEKEMTREETQSLGEHEKDDEVTGSEER). Over residues 23 to 55 (NQKEFAQEKEMTREETQSLGEHEKDDEVTGSEE) the composition is skewed to basic and acidic residues. Intrachain disulfides connect Cys58-Cys72, Cys65-Cys78, Cys69-Cys115, and Cys71-Cys91.

Belongs to the neurotoxin 03 (Tx2) family. 02 subfamily. HNTX-XV sub-subfamily. In terms of tissue distribution, expressed by the venom gland.

The protein localises to the secreted. In terms of biological role, putative ion channel inhibitor. This Cyriopagopus hainanus (Chinese bird spider) protein is Hainantoxin-XV.